The chain runs to 176 residues: Ribosome maturation factor RimM (176 aa).

The 76-residue stretch at Asp-93–Leu-168 folds into the PRC barrel domain.

The protein belongs to the RimM family. In terms of assembly, binds ribosomal protein uS19.

It is found in the cytoplasm. Its function is as follows. An accessory protein needed during the final step in the assembly of 30S ribosomal subunit, possibly for assembly of the head region. Essential for efficient processing of 16S rRNA. May be needed both before and after RbfA during the maturation of 16S rRNA. It has affinity for free ribosomal 30S subunits but not for 70S ribosomes. The protein is Ribosome maturation factor RimM of Oleidesulfovibrio alaskensis (strain ATCC BAA-1058 / DSM 17464 / G20) (Desulfovibrio alaskensis).